A 148-amino-acid polypeptide reads, in one-letter code: Ribonuclease pancreatic (148 aa).

The first 25 residues, 1–25, serve as a signal peptide directing secretion; sequence MGLEKSLMLFPLLVLVLGLVQPSLG. Residues lysine 32 and arginine 35 each coordinate substrate. Histidine 37 (proton acceptor) is an active-site residue. Disulfide bonds link cysteine 50/cysteine 108, cysteine 64/cysteine 119, cysteine 82/cysteine 134, and cysteine 89/cysteine 96. Residues 65 to 69, lysine 90, and arginine 109 each bind substrate; that span reads KPVNT. Catalysis depends on histidine 143, which acts as the Proton donor.

It belongs to the pancreatic ribonuclease family. In terms of assembly, monomer. Interacts with and forms tight 1:1 complexes with RNH1. Dimerization of two such complexes may occur. Interaction with RNH1 inhibits this protein. Pancreas.

The protein resides in the secreted. It carries out the reaction an [RNA] containing cytidine + H2O = an [RNA]-3'-cytidine-3'-phosphate + a 5'-hydroxy-ribonucleotide-3'-[RNA].. It catalyses the reaction an [RNA] containing uridine + H2O = an [RNA]-3'-uridine-3'-phosphate + a 5'-hydroxy-ribonucleotide-3'-[RNA].. Functionally, endonuclease that catalyzes the cleavage of RNA on the 3' side of pyrimidine nucleotides. Acts on single-stranded and double-stranded RNA. The chain is Ribonuclease pancreatic (RNASE1) from Gerbilliscus gambianus (Gambian gerbil).